Reading from the N-terminus, the 892-residue chain is Alanine--tRNA ligase (892 aa).

Zn(2+) contacts are provided by histidine 578, histidine 582, cysteine 681, and histidine 685.

It belongs to the class-II aminoacyl-tRNA synthetase family. Zn(2+) is required as a cofactor.

The protein localises to the cytoplasm. It carries out the reaction tRNA(Ala) + L-alanine + ATP = L-alanyl-tRNA(Ala) + AMP + diphosphate. Functionally, catalyzes the attachment of alanine to tRNA(Ala) in a two-step reaction: alanine is first activated by ATP to form Ala-AMP and then transferred to the acceptor end of tRNA(Ala). Also edits incorrectly charged Ser-tRNA(Ala) and Gly-tRNA(Ala) via its editing domain. The polypeptide is Alanine--tRNA ligase (Cutibacterium acnes (strain DSM 16379 / KPA171202) (Propionibacterium acnes)).